The following is a 413-amino-acid chain: Putative zinc finger protein B0310.2 (413 aa).

2 disordered regions span residues 130–151 and 259–290; these read PIFS…KRSL and VESD…TGPM. The span at 270–281 shows a compositional bias: polar residues; it reads PSPSTGDITENE. 2 C2H2-type zinc fingers span residues 306-330 and 336-358; these read FICM…MFIH and HTCP…KKTH.

It is found in the nucleus. The protein is Putative zinc finger protein B0310.2 of Caenorhabditis elegans.